A 303-amino-acid chain; its full sequence is Probable cell division protein WhiA (303 aa).

A DNA-binding region (H-T-H motif) is located at residues 272 to 303 (SIQQIADSLETPLSKSGVNHRLRKINKIADEL).

The protein belongs to the WhiA family.

Involved in cell division and chromosome segregation. In Streptococcus agalactiae serotype Ia (strain ATCC 27591 / A909 / CDC SS700), this protein is Probable cell division protein WhiA.